The primary structure comprises 75 residues: Beta-defensin 30 (75 aa).

The first 22 residues, 1–22 (MGSLQLTLVLFVLLSYVPPVRS), serve as a signal peptide directing secretion. Intrachain disulfides connect C35/C62, C42/C56, and C46/C63.

Belongs to the beta-defensin family.

Its subcellular location is the secreted. Its function is as follows. Has antibacterial activity. This chain is Beta-defensin 30 (Defb30), found in Mus musculus (Mouse).